The primary structure comprises 142 residues: Large ribosomal subunit protein uL13 (142 aa).

This sequence belongs to the universal ribosomal protein uL13 family. As to quaternary structure, part of the 50S ribosomal subunit.

Functionally, this protein is one of the early assembly proteins of the 50S ribosomal subunit, although it is not seen to bind rRNA by itself. It is important during the early stages of 50S assembly. This is Large ribosomal subunit protein uL13 from Agathobacter rectalis (strain ATCC 33656 / DSM 3377 / JCM 17463 / KCTC 5835 / VPI 0990) (Eubacterium rectale).